We begin with the raw amino-acid sequence, 363 residues long: Uroporphyrinogen decarboxylase (363 aa).

Residues 27-31 (RQAGR), Asp77, Tyr157, Thr212, and His333 each bind substrate.

It belongs to the uroporphyrinogen decarboxylase family. In terms of assembly, homodimer.

It is found in the cytoplasm. It catalyses the reaction uroporphyrinogen III + 4 H(+) = coproporphyrinogen III + 4 CO2. Its pathway is porphyrin-containing compound metabolism; protoporphyrin-IX biosynthesis; coproporphyrinogen-III from 5-aminolevulinate: step 4/4. Catalyzes the decarboxylation of four acetate groups of uroporphyrinogen-III to yield coproporphyrinogen-III. The polypeptide is Uroporphyrinogen decarboxylase (Cupriavidus necator (strain ATCC 17699 / DSM 428 / KCTC 22496 / NCIMB 10442 / H16 / Stanier 337) (Ralstonia eutropha)).